The chain runs to 396 residues: MADKGLEDVPEGQIESNYDETVDSFDEMNLKSELLRGIYAYGFERPSAIQQRAIMPVIKGHDVIAQAQSGTGKTATFSISVLQKIDTNVKQCQALILAPTRELAQQIQKVVVAIGDFMNIECHACIGGTSVRDDMKALQDGPQVVVGTPGRVHDMIQRRFLKTDGMKMFVLDEADEMLSRGFTEQIYDIFQLLPQSTQVVLLSATMPQDVLEVTTKFMRDPVRILVKKDELTLEGIKQFYIAVEKEEWKLDTLSDLYETVTITQAVIFCNTRRKVDWLTDKLTARDFTVSAMHGDMDQAQRDLIMKEFRSGSSRVLIATDLLARGIDVQQVSLVINYDLPANRENYIHRIGRGGRFGRKGVAINFVTADDVRMMREIEQFYSTQIEEMPMNVADLI.

Residues 23 to 51 (DSFDEMNLKSELLRGIYAYGFERPSAIQQ) carry the Q motif motif. The 171-residue stretch at 54–224 (IMPVIKGHDV…TKFMRDPVRI (171 aa)) folds into the Helicase ATP-binding domain. Position 67 to 74 (67 to 74 (AQSGTGKT)) interacts with ATP. Positions 172-175 (DEAD) match the DEAD box motif. Residues 235 to 396 (GIKQFYIAVE…EMPMNVADLI (162 aa)) enclose the Helicase C-terminal domain.

This sequence belongs to the DEAD box helicase family. eIF4A subfamily. As to quaternary structure, component of the eIF4F complex, which composition varies with external and internal environmental conditions. It is composed of at least eIF4A, eIF4E and eIF4G.

It is found in the cytoplasm. The enzyme catalyses ATP + H2O = ADP + phosphate + H(+). Functionally, ATP-dependent RNA helicase which is a subunit of the eIF4F complex involved in cap recognition and is required for mRNA binding to ribosome. In the current model of translation initiation, eIF4A unwinds RNA secondary structures in the 5'-UTR of mRNAs which is necessary to allow efficient binding of the small ribosomal subunit, and subsequent scanning for the initiator codon. The polypeptide is ATP-dependent RNA helicase eIF4A (TIF1) (Pyricularia oryzae (strain 70-15 / ATCC MYA-4617 / FGSC 8958) (Rice blast fungus)).